The sequence spans 289 residues: 3-methyl-2-oxobutanoate hydroxymethyltransferase (289 aa).

The span at 1–15 (MSTTFKLDTSTSRAN) shows a compositional bias: polar residues. Residues 1 to 21 (MSTTFKLDTSTSRANPTPAPM) form a disordered region. Asp-67 and Asp-106 together coordinate Mg(2+). 3-methyl-2-oxobutanoate-binding positions include 67–68 (DS), Asp-106, and Lys-136. Glu-138 lines the Mg(2+) pocket. The active-site Proton acceptor is Glu-205.

Belongs to the PanB family. Homodecamer; pentamer of dimers. The cofactor is Mg(2+).

It is found in the cytoplasm. It catalyses the reaction 3-methyl-2-oxobutanoate + (6R)-5,10-methylene-5,6,7,8-tetrahydrofolate + H2O = 2-dehydropantoate + (6S)-5,6,7,8-tetrahydrofolate. It participates in cofactor biosynthesis; (R)-pantothenate biosynthesis; (R)-pantoate from 3-methyl-2-oxobutanoate: step 1/2. Its function is as follows. Catalyzes the reversible reaction in which hydroxymethyl group from 5,10-methylenetetrahydrofolate is transferred onto alpha-ketoisovalerate to form ketopantoate. This is 3-methyl-2-oxobutanoate hydroxymethyltransferase from Erythrobacter litoralis (strain HTCC2594).